We begin with the raw amino-acid sequence, 142 residues long: Hydrogenase maturation factor HypA (142 aa).

H2 serves as a coordination point for Ni(2+). Residues C73, C76, C109, and C112 each coordinate Zn(2+).

The protein belongs to the HypA/HybF family.

Its function is as follows. Involved in the maturation of [NiFe] hydrogenases. Required for nickel insertion into the metal center of the hydrogenase. This Methanopyrus kandleri (strain AV19 / DSM 6324 / JCM 9639 / NBRC 100938) protein is Hydrogenase maturation factor HypA.